The sequence spans 1059 residues: Microtubule-associated protein 1S (1059 aa).

The necessary for the microtubule-organizing center localization stretch occupies residues 1-797; that stretch reads MAAVAGSGAA…SESLPTLSDS (797 aa). A phosphoserine mark is found at serine 321 and serine 472. Disordered regions lie at residues 461 to 733 and 751 to 942; these read PQDL…ASPH and VPMA…SATP. 2 stretches are compositionally biased toward basic and acidic residues: residues 466 to 486 and 494 to 530; these read GPGR…KREG and PGQE…KDPK. Over residues 547 to 557 the composition is skewed to polar residues; sequence SVPNLKKTNAQ. Serine 582 carries the post-translational modification Phosphoserine. Positions 591-603 are enriched in low complexity; the sequence is ASPPSAACGSPAS. Residue threonine 638 is modified to Phosphothreonine. A Phosphoserine modification is found at serine 640. Residues 642–652 show a composition bias toward basic and acidic residues; sequence ESHRSPAEGSE. Serine 655 and serine 657 each carry phosphoserine. A necessary for interaction with RASSF1 isoform A and isoform C region spans residues 666-1059; that stretch reads PDASPTVTTP…DAFPACKVEF (394 aa). Positions 670–680 are enriched in low complexity; sequence PTVTTPTVTTP. The segment at 714 to 966 is necessary for association with microtubules; it reads EAGLSLPLRG…GSSAHLVDEE (253 aa). Phosphoserine occurs at positions 731 and 759. Low complexity predominate over residues 759-769; sequence SPGSSNDSSAR. The segment covering 783–796 has biased composition (polar residues); sequence PPTSVSESLPTLSD. A Phosphoserine modification is found at serine 809. Pro residues predominate over residues 825 to 836; it reads PDPLKVPPPLPD. 2 stretches are compositionally biased toward low complexity: residues 873–887 and 923–936; these read AAAP…AKTK and TATR…SSRP. Residues 960-1059 are necessary for association with actin; sequence AHLVDEEFFQ…DAFPACKVEF (100 aa). Residues 967 to 991 form a necessary for the mitochondrial aggregation and genome destruction region; sequence FFQRVRALCYVISGQDQRKEEGMRA.

It belongs to the MAP1 family. Heterodimer of a heavy and a light chain. Interacts with microtubules and actin. Both MAP1S heavy and light chains interact with microtubules. MAP1S light chain interacts with actin. Interacts (via C-terminus) with GAN (via Kelch domains). Interacts with ESR1, LRPPRC, RASSF1 isoform A and isoform C, microtubules and VCY2. Interacts with WDR47 (via N-terminus of light chain). In terms of tissue distribution, expressed in neurons (at protein level). Expressed in spermatocytes, spermatids and spermatozoa. Expressed in the cerebral cortex. Highly expressed in testis. Moderately expressed in the brain, colon, heart, kidney, liver, lung, placenta, small intestine, spleen and stomach. Weakly expressed in muscle.

The protein localises to the nucleus. It is found in the cytoplasm. Its subcellular location is the cytosol. The protein resides in the cytoskeleton. It localises to the spindle. In terms of biological role, microtubule-associated protein that mediates aggregation of mitochondria resulting in cell death and genomic destruction (MAGD). Plays a role in anchoring the microtubule organizing center to the centrosomes. Binds to DNA. Plays a role in apoptosis. Involved in the formation of microtubule bundles. This Homo sapiens (Human) protein is Microtubule-associated protein 1S (MAP1S).